The primary structure comprises 424 residues: Piriformospora indica-insensitive protein 2 (424 aa).

Residues 1-21 (MLWQTFFSSLLLLSLLFGCNG) form the signal peptide. 10 LRR repeats span residues 141–166 (ASNL…IGNL), 167–190 (TKLK…ICNL), 191–213 (KRLK…CFKG), 214–237 (LKEL…SFGD), 238–263 (LVSL…GFLK), 265–286 (LTLL…IENI), 287–311 (QSLT…NWGK), 312–336 (MSNL…LTNL), 337–360 (KRLR…KLEA), and 362–387 (PCLG…FYEK).

It localises to the cell membrane. In terms of biological role, required for growth promotion and enhanced seed production mediated by the endophytic fungus Piriformospora indica. The chain is Piriformospora indica-insensitive protein 2 (PII-2) from Arabidopsis thaliana (Mouse-ear cress).